Here is a 652-residue protein sequence, read N- to C-terminus: Threonine--tRNA ligase (652 aa).

One can recognise a TGS domain in the interval 1–63 (MAEISLTFPD…TESGDFQLIT (63 aa)). Residues 246–545 (DHRVIGRDLD…LIEMYKGAFP (300 aa)) form a catalytic region. Positions 340, 391, and 522 each coordinate Zn(2+).

This sequence belongs to the class-II aminoacyl-tRNA synthetase family. In terms of assembly, homodimer. The cofactor is Zn(2+).

It localises to the cytoplasm. The enzyme catalyses tRNA(Thr) + L-threonine + ATP = L-threonyl-tRNA(Thr) + AMP + diphosphate + H(+). Catalyzes the attachment of threonine to tRNA(Thr) in a two-step reaction: L-threonine is first activated by ATP to form Thr-AMP and then transferred to the acceptor end of tRNA(Thr). Also edits incorrectly charged L-seryl-tRNA(Thr). The chain is Threonine--tRNA ligase from Leuconostoc mesenteroides subsp. mesenteroides (strain ATCC 8293 / DSM 20343 / BCRC 11652 / CCM 1803 / JCM 6124 / NCDO 523 / NBRC 100496 / NCIMB 8023 / NCTC 12954 / NRRL B-1118 / 37Y).